A 122-amino-acid polypeptide reads, in one-letter code: HetP-like commitment protein Alr3234 (122 aa).

This sequence belongs to the HetP family. In bacterial two-hybrid assays interacts robustly with itself, Asl1930, Alr2902 and HetR and weakly with HetP.

Its function is as follows. Delays heterocyst differentiation and commitment when nitrogen is limiting. Interplay between the 4 HetP paralogs controls the timing of commitment to heterocyst formation and its duration. Epistatic analysis show that the 3 paralogs act upstream of hetP to delay commitment (asl1930, alr3234) or inhibit development (alr2902). Asl1930 and Alr3234 must also attenuate the activity of Alr2902. Ectopic expression does not complement a hetP deletion. In Nostoc sp. (strain PCC 7120 / SAG 25.82 / UTEX 2576), this protein is HetP-like commitment protein Alr3234.